Consider the following 485-residue polypeptide: MSLGEINENVKLAREYALLGNYSSAVVCYQGVLEQIKKYLYSVRDSSLQQKWQQVWQEINEETKQVREIMTTLESFQMESTPSKPSSFAQDNDIMPVHVEHRSSPCVVRKSSVPYKDSKGHGNRLSVGPRGQARPSPRVANGDKGKPQKSKEKKENPSKPKEDKNKAEAVETEVKRFDRGGEDKDLIDALERDIISQNPNVTWDDIADLEEAKKLLKEAVVLPMWMPEFFKGIRRPWKGVLMVGPPGTGKTLLAKAVATECRTTFFNVSSSTLTSKYRGESEKLVRLLFEMARFYAPTTIFIDEIDSICSRRGTSEEHEASRRVKAELLVQMDGVGGTSENDPSKMVMVLAATNFPWDIDEALRRRLEKRIYIPLPSAKGRVDLLKINLKELDLANDVNMDKIAEQMEGYSGADITNVCRDASLMAMRRRIEGLTPEEIRNLPKDEMHMPTTMEDFETALKKVSKSVSAADLEKYEKWIAEFGSC.

The disordered stretch occupies residues 101–173 (HRSSPCVVRK…KNKAEAVETE (73 aa)). The span at 141 to 173 (NGDKGKPQKSKEKKENPSKPKEDKNKAEAVETE) shows a compositional bias: basic and acidic residues. 244 to 251 (GPPGTGKT) is an ATP binding site.

The protein belongs to the AAA ATPase family. Katanin p60 subunit A1 subfamily. As to quaternary structure, can homooligomerize into hexameric rings, which may be promoted by interaction with microtubules. Interacts with katnb1, which may serve as a targeting subunit.

It localises to the cytoplasm. The protein resides in the cytoskeleton. Its subcellular location is the microtubule organizing center. It is found in the centrosome. The protein localises to the spindle pole. It localises to the spindle. It carries out the reaction n ATP + n H2O + a microtubule = n ADP + n phosphate + (n+1) alpha/beta tubulin heterodimers.. With respect to regulation, ATPase activity is stimulated by microtubules, which promote homooligomerization. ATP-dependent microtubule severing is stimulated by interaction with katnb1. Functionally, catalytic subunit of a complex which severs microtubules in an ATP-dependent manner. Microtubule severing may promote rapid reorganization of cellular microtubule arrays and the release of microtubules from the centrosome following nucleation. The protein is Katanin p60 ATPase-containing subunit A1 (katna1) of Danio rerio (Zebrafish).